A 293-amino-acid chain; its full sequence is Movement protein BC1 (293 aa).

A disordered region spans residues 207-228; it reads SWASRSTIGPSPSYAGSDQGDA. Polar residues predominate over residues 209 to 222; sequence ASRSTIGPSPSYAG.

It belongs to the begomovirus movement protein BC1 family. As to quaternary structure, binds to dimeric supercoiled plasmid DNA. Post-translationally, phosphorylated.

Its subcellular location is the host cell membrane. It localises to the host microsome membrane. The protein resides in the host endoplasmic reticulum membrane. Movement protein involved in the cell-to-cell and systemic transport of viral genomic DNA. Begomoviruses use 2 proteins to transport their DNA from cell to cell. The nuclear shuttle protein (NSP) shuttles it between nucleus and cytoplasm and the movement protein (MP) probably transports the DNA-NSP complex to the cell periphery and facilitates further movement across the cell wall. This chain is Movement protein BC1, found in Tomato golden mosaic virus (strain Yellow vein) (TGMV).